The chain runs to 471 residues: tRNA(Ile)-lysidine synthase (471 aa).

35–40 is an ATP binding site; sequence SGGADS.

This sequence belongs to the tRNA(Ile)-lysidine synthase family.

The protein resides in the cytoplasm. The catalysed reaction is cytidine(34) in tRNA(Ile2) + L-lysine + ATP = lysidine(34) in tRNA(Ile2) + AMP + diphosphate + H(+). Its function is as follows. Ligates lysine onto the cytidine present at position 34 of the AUA codon-specific tRNA(Ile) that contains the anticodon CAU, in an ATP-dependent manner. Cytidine is converted to lysidine, thus changing the amino acid specificity of the tRNA from methionine to isoleucine. This Geobacter sulfurreducens (strain ATCC 51573 / DSM 12127 / PCA) protein is tRNA(Ile)-lysidine synthase.